The primary structure comprises 235 residues: MTQQFYVSPEQLMKDRADFARKGIARGRSVVVISCEEGIALVAENPSPSLHKIGEIYDKIAFAAVGKYNEFESLRQAGVRYADVRGYSYDREDVTARGLASVYAQSLGAVFTAEQKPFEVELAVAEVGGNQSDDHLYRLTFDGSIADEKRFIVMGGQADKVAETVEGGWQQELNFAGAIRLAMKGLVTDKEAGELPASALEVAVLDRASESTRGSRRAFRRLGDDEIAALLSKEN.

This sequence belongs to the peptidase T1A family. In terms of assembly, the 20S proteasome core is composed of 14 alpha and 14 beta subunits that assemble into four stacked heptameric rings, resulting in a barrel-shaped structure. The two inner rings, each composed of seven catalytic beta subunits, are sandwiched by two outer rings, each composed of seven alpha subunits. The catalytic chamber with the active sites is on the inside of the barrel. Has a gated structure, the ends of the cylinder being occluded by the N-termini of the alpha-subunits. Is capped by the proteasome-associated ATPase, ARC.

It localises to the cytoplasm. The protein operates within protein degradation; proteasomal Pup-dependent pathway. The formation of the proteasomal ATPase ARC-20S proteasome complex, likely via the docking of the C-termini of ARC into the intersubunit pockets in the alpha-rings, may trigger opening of the gate for substrate entry. Interconversion between the open-gate and close-gate conformations leads to a dynamic regulation of the 20S proteasome proteolysis activity. Component of the proteasome core, a large protease complex with broad specificity involved in protein degradation. In Arthrobacter sp. (strain FB24), this protein is Proteasome subunit alpha.